The chain runs to 209 residues: Uracil phosphoribosyltransferase (209 aa).

Residues arginine 79, arginine 104, and 131 to 139 (DPMLATGNS) contribute to the 5-phospho-alpha-D-ribose 1-diphosphate site. Residues isoleucine 194 and 199–201 (GDA) contribute to the uracil site. Aspartate 200 is a 5-phospho-alpha-D-ribose 1-diphosphate binding site.

Belongs to the UPRTase family. Mg(2+) serves as cofactor.

The enzyme catalyses UMP + diphosphate = 5-phospho-alpha-D-ribose 1-diphosphate + uracil. The protein operates within pyrimidine metabolism; UMP biosynthesis via salvage pathway; UMP from uracil: step 1/1. Its activity is regulated as follows. Allosterically activated by GTP. In terms of biological role, catalyzes the conversion of uracil and 5-phospho-alpha-D-ribose 1-diphosphate (PRPP) to UMP and diphosphate. The polypeptide is Uracil phosphoribosyltransferase (Rhizobium rhizogenes (strain K84 / ATCC BAA-868) (Agrobacterium radiobacter)).